The chain runs to 1992 residues: Otoferlin (1992 aa).

3 consecutive C2 domains span residues 1–98, 241–362, and 405–536; these read MALV…EVSD, KRSK…HKWA, and IEGN…FLPT. Residues 1–1958 are Cytoplasmic-facing; it reads MALVVHLKTV…IRYFIWHNYR (1958 aa). The tract at residues 655-699 is disordered; that stretch reads PALAKKKKEGGGESEEEESELIHNSSEEEAEDDGDLTSVPSTPPM. 2 consecutive C2 domains span residues 952–1077 and 1124–1250; these read IQAV…PPRF and RGPI…NNWA. Ca(2+) is bound by residues Asp984, Asp990, Asp1046, and Asp1048. Residues 1282–1363 adopt a coiled-coil conformation; it reads VKVDLNEDEK…ESAEIKADDF (82 aa). 2 disordered regions span residues 1288 to 1311 and 1354 to 1399; these read EDEK…EEEP and ESAE…KPKV. Residues 1356–1399 are compositionally biased toward basic and acidic residues; it reads AEIKADDFPMKGTKPKEKSKDKKSTKDKKKNNDGTEKRPPKPKV. C2 domains are found at residues 1470–1588 and 1711–1860; these read DPNM…ATCG and PAPG…KQCS. The Ca(2+) site is built by Asp1503, Asp1509, Asp1558, Asp1560, Asp1566, Asp1831, Ser1834, and Asp1837. A helical transmembrane segment spans residues 1959–1979; it reads WLILKALALLLLLLLVGLFLY. Topologically, residues 1980 to 1992 are extracellular; the sequence is SIPGYLVKKLLGA.

It belongs to the ferlin family. Requires Ca(2+) as cofactor.

The protein resides in the cytoplasmic vesicle. Its subcellular location is the secretory vesicle. It is found in the synaptic vesicle membrane. The protein localises to the basolateral cell membrane. It localises to the endoplasmic reticulum membrane. The protein resides in the golgi apparatus membrane. Its subcellular location is the presynaptic cell membrane. It is found in the cell membrane. Key calcium ion sensor involved in the Ca(2+)-triggered synaptic vesicle-plasma membrane fusion and in the control of neurotransmitter release at these output synapses. The sequence is that of Otoferlin (otof) from Danio rerio (Zebrafish).